The chain runs to 129 residues: MAGTLFIILRFVDTTLPSSRVYCVRSLEVSVAVELAAATVLAFESIGVVDDCGRSVLFSIILIAAFICSVFLIASEDIAGSRRSTGSCVTLWEGRNISFCLYRSNWLNTVPVGYMFFLRKNRSLDERYF.

At 1–28 (MAGTLFIILRFVDTTLPSSRVYCVRSLE) the chain is on the cytoplasmic side. A helical transmembrane segment spans residues 29-49 (VSVAVELAAATVLAFESIGVV). Residues 50–54 (DDCGR) are Extracellular-facing. Residues 55-75 (SVLFSIILIAAFICSVFLIAS) traverse the membrane as a helical segment. The Cytoplasmic segment spans residues 76-129 (EDIAGSRRSTGSCVTLWEGRNISFCLYRSNWLNTVPVGYMFFLRKNRSLDERYF).

It localises to the membrane. This is an uncharacterized protein from Saccharomyces cerevisiae (strain ATCC 204508 / S288c) (Baker's yeast).